The primary structure comprises 434 residues: GTPase Obg (434 aa).

The 158-residue stretch at 1-158 (MFLDTAKIKV…RELQLELKIL (158 aa)) folds into the Obg domain. The OBG-type G domain maps to 159–336 (ADVGLVGFPS…LLDATAELLD (178 aa)). Residues 165-172 (GFPSVGKS), 190-194 (FTTIV), 212-215 (DLPG), 282-285 (NKMD), and 317-319 (SGL) each bind GTP. The Mg(2+) site is built by serine 172 and threonine 192. Positions 356–434 (GFDEEEKAFE…IGKFEFEFVD (79 aa)) constitute an OCT domain.

The protein belongs to the TRAFAC class OBG-HflX-like GTPase superfamily. OBG GTPase family. Monomer. The cofactor is Mg(2+).

It localises to the cytoplasm. Its function is as follows. An essential GTPase which binds GTP, GDP and possibly (p)ppGpp with moderate affinity, with high nucleotide exchange rates and a fairly low GTP hydrolysis rate. Plays a role in control of the cell cycle, stress response, ribosome biogenesis and in those bacteria that undergo differentiation, in morphogenesis control. This Streptococcus pneumoniae serotype 19F (strain G54) protein is GTPase Obg.